Here is a 185-residue protein sequence, read N- to C-terminus: uncharacterized protein (185 aa).

An N-terminal signal peptide occupies residues 1-29; it reads MKNQEIIEVKSKMFLRIWAFVGSAGMGLA. C30 carries the N-palmitoyl cysteine lipid modification. C30 carries S-diacylglycerol cysteine lipidation. Residues 45 to 67 form a helical membrane-spanning segment; sequence YLLAIPAGFLFTLFCLYLFIIFF.

The protein to B.subtilis YfjE.

It localises to the cell membrane. This is an uncharacterized protein from Bacillus subtilis (strain 168).